We begin with the raw amino-acid sequence, 485 residues long: Protein nucleotidyltransferase YdiU (485 aa).

ATP contacts are provided by glycine 90, glycine 92, arginine 93, lysine 113, aspartate 125, glycine 126, arginine 176, and arginine 183. Residue aspartate 252 is the Proton acceptor of the active site. The Mg(2+) site is built by asparagine 253 and aspartate 262. ATP is bound at residue aspartate 262.

This sequence belongs to the SELO family. The cofactor is Mg(2+). It depends on Mn(2+) as a cofactor.

The catalysed reaction is L-seryl-[protein] + ATP = 3-O-(5'-adenylyl)-L-seryl-[protein] + diphosphate. It carries out the reaction L-threonyl-[protein] + ATP = 3-O-(5'-adenylyl)-L-threonyl-[protein] + diphosphate. The enzyme catalyses L-tyrosyl-[protein] + ATP = O-(5'-adenylyl)-L-tyrosyl-[protein] + diphosphate. It catalyses the reaction L-histidyl-[protein] + UTP = N(tele)-(5'-uridylyl)-L-histidyl-[protein] + diphosphate. The catalysed reaction is L-seryl-[protein] + UTP = O-(5'-uridylyl)-L-seryl-[protein] + diphosphate. It carries out the reaction L-tyrosyl-[protein] + UTP = O-(5'-uridylyl)-L-tyrosyl-[protein] + diphosphate. Nucleotidyltransferase involved in the post-translational modification of proteins. It can catalyze the addition of adenosine monophosphate (AMP) or uridine monophosphate (UMP) to a protein, resulting in modifications known as AMPylation and UMPylation. In Aliivibrio salmonicida (strain LFI1238) (Vibrio salmonicida (strain LFI1238)), this protein is Protein nucleotidyltransferase YdiU.